The following is a 102-amino-acid chain: MTLTLGHFLSLGAMLFALSVIGIFLNRKNLIVLLMAIELMLLAVNTNFVAFSYYLGDMHGQIFVFFILTVAAAESAIGLAILVLLFRNKSSINVDELNTLKG.

Transmembrane regions (helical) follow at residues 5–25 (LGHFLSLGAMLFALSVIGIFL), 31–51 (IVLLMAIELMLLAVNTNFVAF), and 62–82 (IFVFFILTVAAAESAIGLAIL).

This sequence belongs to the complex I subunit 4L family. NDH-1 is composed of 14 different subunits. Subunits NuoA, H, J, K, L, M, N constitute the membrane sector of the complex.

The protein resides in the cell inner membrane. It catalyses the reaction a quinone + NADH + 5 H(+)(in) = a quinol + NAD(+) + 4 H(+)(out). NDH-1 shuttles electrons from NADH, via FMN and iron-sulfur (Fe-S) centers, to quinones in the respiratory chain. The immediate electron acceptor for the enzyme in this species is believed to be ubiquinone. Couples the redox reaction to proton translocation (for every two electrons transferred, four hydrogen ions are translocated across the cytoplasmic membrane), and thus conserves the redox energy in a proton gradient. The protein is NADH-quinone oxidoreductase subunit K of Albidiferax ferrireducens (strain ATCC BAA-621 / DSM 15236 / T118) (Rhodoferax ferrireducens).